A 374-amino-acid polypeptide reads, in one-letter code: MAAMRAHARRRHPHALMSRAAGLPRLSWFAGLTWFAGGSTGAGCAAHPALAGLTAGARCPAYAAISASTARPAATALPAVAASTARPAATAGTTPATGASGSARPTDAAGMADLARPGVVATHAVRTLGTTGSRAIGLCPSQPLDCPRSPQATLNLGSMGRSLDGPQWRRARVRLCGRWWRRSNTTRGASPRPPSTCRGDNVSMIELEVHQADVTKLELDAITNAANTRLRHAGGVAAAIARAGGPELQRESTEKAPIGLGEAVETTAGDMPARYVIHAATMELGGPTSGEIITAATAATLRKADELGCRSLALVAFGTGVGGFPLDDAARLMVGAVRRHRPGSLQRVVFAVHGDAAERAFSAAIQAGEDTARR.

Residues Arg86–Arg104 are compositionally biased toward low complexity. The disordered stretch occupies residues Arg86–Ala109. The region spanning Trp179–Gly354 is the Macro domain.

This is an uncharacterized protein from Mycobacterium tuberculosis (strain CDC 1551 / Oshkosh).